The sequence spans 1707 residues: Mediator of DNA damage checkpoint protein 1 (1707 aa).

The interval 1-23 (MESTQVIDWDAEEEEETELSSGS) is disordered. Residues 1–150 (MESTQVIDWD…PRSLLTIEKT (150 aa)) form an interaction with CHEK2 region. The interaction with the MRN complex stretch occupies residues 2-222 (ESTQVIDWDA…SSPFGLGSDT (221 aa)). Thr4 carries the post-translational modification Phosphothreonine. The span at 9–18 (WDAEEEEETE) shows a compositional bias: acidic residues. Positions 54–105 (NVVGRSPDCSVALPFPSISKQHAVIEISAWNKAPILQDCGSLNGTQIVKPPR) constitute an FHA domain. Thr146 bears the Phosphothreonine mark. The segment at 166 to 328 (ADSEEEGDFP…EERIPVTPPV (163 aa)) is disordered. Residues Ser168 and Ser176 each carry the phosphoserine modification. The span at 183–192 (GQRNTASPSA) shows a compositional bias: polar residues. Ser198 and Ser220 each carry phosphoserine. Thr222 bears the Phosphothreonine mark. Polar residues predominate over residues 252–263 (ANGTTAGIQAQP). The span at 264-278 (TEHKLKDTKVKKEAG) shows a compositional bias: basic and acidic residues. At Ser298 the chain carries Phosphoserine. Thr300 carries the post-translational modification Phosphothreonine. Ser313 is modified (phosphoserine). At Thr315 the chain carries Phosphothreonine. Ser360 carries the phosphoserine modification. Phosphothreonine is present on Thr362. The segment covering 369–378 (ALDVPLERNH) has biased composition (basic and acidic residues). A disordered region spans residues 369-398 (ALDVPLERNHTPMVINSDTDEEEEEEEEVS). Ser385 is modified (phosphoserine). The segment covering 386-397 (DTDEEEEEEEEV) has biased composition (acidic residues). Phosphothreonine is present on Thr387. Phosphoserine is present on residues Ser398, Ser415, Ser425, Ser438, and Ser442. 4 disordered regions span residues 417-497 (DPGA…PGSH), 520-642 (PGPS…AKEC), 679-699 (LFPCTLPQEPGPSHLSLQTPG), and 718-746 (REQSETSELHEAHGSQPSLPREPPGHQHL). The span at 425–439 (SQPQVLVEQSQSASG) shows a compositional bias: polar residues. Thr444 carries the phosphothreonine modification. Ser461 carries the post-translational modification Phosphoserine. Residue Thr470 is modified to Phosphothreonine. 5 positions are modified to phosphoserine: Ser492, Ser493, Ser591, Ser593, and Ser595. The segment covering 580-595 (VSEQESTLEVRSQSGS) has biased composition (polar residues). The segment covering 626 to 642 (GREREAHVGRTKSAKEC) has biased composition (basic and acidic residues). Positions 719 to 730 (EQSETSELHEAH) are enriched in basic and acidic residues. Ser735 and Ser750 each carry phosphoserine. Lys769 carries the N6-acetyllysine modification. 3 stretches are compositionally biased toward basic and acidic residues: residues 778–804 (ADRMTPEREPLEREIRGRTENSERDVI), 812–868 (TKDR…REWE), and 875–889 (TPDRGVTEEGSHDQK). Disordered stretches follow at residues 778 to 899 (ADRM…TLKP) and 914 to 1510 (IITG…QETA). Phosphoserine is present on residues Ser885, Ser929, and Ser962. Residues 968–986 (STQSLLTSQSQKQSTPQPL) show a composition bias toward low complexity. Position 991 is a phosphoserine (Ser991). 3 stretches are compositionally biased toward polar residues: residues 1026–1056 (PNTTCPTNQPAASRPTSRPTRGRANRSSTRT), 1068–1086 (QPSTSTEQPVIPKLTSQVT), and 1101–1113 (EIQSPTSTEQSVT). A Phosphothreonine modification is found at Thr1056. Ser1104, Ser1126, and Ser1128 each carry phosphoserine. Phosphothreonine occurs at positions 1132, 1173, and 1234. Polar residues-rich tracts occupy residues 1225-1241 (PLTSAKQPVTPNLTSRA), 1265-1281 (PSTSTEQPDTREPSSQA), 1295-1308 (VPTTPELQPFTSKK), and 1317-1326 (LVTQGRTYKP). 2 positions are modified to phosphothreonine: Thr1297 and Thr1298. Position 1327 is a phosphoserine (Ser1327). Residues 1343–1363 (PSTSTDHLVTPKVTDQSLTLQ) show a composition bias toward polar residues. Thr1352 is subject to Phosphothreonine. Ser1359 carries the post-translational modification Phosphoserine. Residues 1364-1376 (SSPLSASPVSSTP) show a composition bias toward low complexity. Thr1375 is subject to Phosphothreonine. Pro residues predominate over residues 1378–1393 (LKPPVPIAQPVTPEPI). Residue Lys1418 forms a Glycyl lysine isopeptide (Lys-Gly) (interchain with G-Cter in SUMO2) linkage. Low complexity predominate over residues 1421–1441 (SALSEPEPQSSASQSSGASEA). Phosphoserine is present on residues Ser1435, Ser1436, Ser1439, and Ser1443. A compositionally biased stretch (basic and acidic residues) spans 1459–1473 (VIKEEPVETEVKEEP). A Glycyl lysine isopeptide (Lys-Gly) (interchain with G-Cter in SUMO1); alternate cross-link involves residue Lys1461. Lys1461 is covalently cross-linked (Glycyl lysine isopeptide (Lys-Gly) (interchain with G-Cter in SUMO2); alternate). Thr1480 carries the phosphothreonine modification. Positions 1481-1493 (PEKRKRDHAEEVT) are enriched in basic and acidic residues. Position 1496 is an N6-acetyllysine (Lys1496). BRCT domains lie at 1510 to 1588 (APKV…DYLV) and 1609 to 1700 (RERR…FVLS).

In terms of assembly, homodimer. Interacts with H2AX, which requires phosphorylation of H2AX on 'Ser-139'. Interacts with the MRN complex, composed of MRE11, RAD50, and NBN. Interacts with CHEK2, which requires ATM-mediated phosphorylation of 'Thr-68' within the FHA domain of CHEK2. Interacts constitutively with the BRCA1-BARD1 complex, SMC1A and TP53BP1. Interacts with ATM and FANCD2, and these interactions are reduced upon DNA damage. Also interacts with the PRKDC complex, composed of XRCC6/KU70, XRCC5/KU80 and PRKDC/XRCC7. This interaction may be required for PRKDC autophosphorylation, which is essential for DNA double strand break (DSB) repair. When phosphorylated by ATM, interacts with RNF8 (via FHA domain). Interacts with CEP164. When phosphorylated, interacts with APTX (via FHA-like domain). Interacts (when phosphorylated) with TOPBP1; promoting TOPBP1 localization to DNA damage sites during mitosis. Interacts (when phosphorylated) with NBN; promoting NBN and MRN complex localization to DNA damage sites. Post-translationally, phosphorylated upon exposure to ionizing radiation (IR), ultraviolet radiation (UV), and hydroxyurea (HU). Phosphorylation in response to IR requires ATM, NBN, and possibly CHEK2. Also phosphorylated during the G2/M phase of the cell cycle and during activation of the mitotic spindle checkpoint. Phosphorylation at Thr-4 by ATM stabilizes and enhances homodimerization via the FHA domain. Phosphorylated at Ser-168 and Ser-198 by CK2 in response to DNA damage during mitosis, promoting interaction with TOPBP1. Phosphorylated by CK2 in response to DNA damage, promoting interaction with NBN and recruitment of the MRN complex to DNA damage sites. In terms of processing, sumoylation at Lys-1461 by PIAS4 following DNA damage promotes ubiquitin-mediated degradation. Ubiquitinated by RNF4, leading to proteasomal degradation; undergoes 'Lys-48'-linked polyubiquitination.

It localises to the nucleus. It is found in the chromosome. In terms of biological role, histone reader protein required for checkpoint-mediated cell cycle arrest in response to DNA damage within both the S phase and G2/M phases of the cell cycle. Specifically recognizes and binds histone H2AX phosphorylated at 'Ser-139', a marker of DNA damage, serving as a scaffold for the recruitment of DNA repair and signal transduction proteins to discrete foci of DNA damage sites. Also required for downstream events subsequent to the recruitment of these proteins. These include phosphorylation and activation of the ATM, CHEK1 and CHEK2 kinases, and stabilization of TP53/p53 and apoptosis. ATM and CHEK2 may also be activated independently by a parallel pathway mediated by TP53BP1. Required for chromosomal stability during mitosis by promoting recruitment of TOPBP1 to DNA double strand breaks (DSBs): TOPBP1 forms filamentous assemblies that bridge MDC1 and tether broken chromosomes during mitosis. Required for the repair of DSBs via homologous recombination by promoting recruitment of NBN component of the MRN complex to DSBs. This is Mediator of DNA damage checkpoint protein 1 (Mdc1) from Mus musculus (Mouse).